A 152-amino-acid chain; its full sequence is Deoxyuridine 5'-triphosphate nucleotidohydrolase (152 aa).

Substrate-binding positions include 63–65 (RSG), N76, and 80–82 (TID). The tract at residues 129 to 152 (LDDTERGQGGYGSTGVSAMPPVDG) is disordered.

It belongs to the dUTPase family. Mg(2+) is required as a cofactor.

It catalyses the reaction dUTP + H2O = dUMP + diphosphate + H(+). It participates in pyrimidine metabolism; dUMP biosynthesis; dUMP from dCTP (dUTP route): step 2/2. In terms of biological role, this enzyme is involved in nucleotide metabolism: it produces dUMP, the immediate precursor of thymidine nucleotides and it decreases the intracellular concentration of dUTP so that uracil cannot be incorporated into DNA. This chain is Deoxyuridine 5'-triphosphate nucleotidohydrolase, found in Cutibacterium acnes (strain DSM 16379 / KPA171202) (Propionibacterium acnes).